The primary structure comprises 153 residues: uncharacterized protein (153 aa).

It to M.jannaschii MJ1183.

This is an uncharacterized protein from Methanothermobacter thermautotrophicus (strain ATCC 29096 / DSM 1053 / JCM 10044 / NBRC 100330 / Delta H) (Methanobacterium thermoautotrophicum).